A 136-amino-acid polypeptide reads, in one-letter code: ATP synthase epsilon chain (136 aa).

Belongs to the ATPase epsilon chain family. F-type ATPases have 2 components, CF(1) - the catalytic core - and CF(0) - the membrane proton channel. CF(1) has five subunits: alpha(3), beta(3), gamma(1), delta(1), epsilon(1). CF(0) has three main subunits: a, b and c.

Its subcellular location is the cellular thylakoid membrane. Functionally, produces ATP from ADP in the presence of a proton gradient across the membrane. This chain is ATP synthase epsilon chain, found in Parasynechococcus marenigrum (strain WH8102).